The chain runs to 309 residues: NAD kinase (309 aa).

Catalysis depends on aspartate 89, which acts as the Proton acceptor. NAD(+) contacts are provided by residues 89 to 90, 163 to 164, histidine 174, arginine 191, aspartate 193, and 204 to 209; these read DG, NE, and TAYALS.

Belongs to the NAD kinase family. A divalent metal cation is required as a cofactor.

The protein resides in the cytoplasm. It catalyses the reaction NAD(+) + ATP = ADP + NADP(+) + H(+). In terms of biological role, involved in the regulation of the intracellular balance of NAD and NADP, and is a key enzyme in the biosynthesis of NADP. Catalyzes specifically the phosphorylation on 2'-hydroxyl of the adenosine moiety of NAD to yield NADP. The chain is NAD kinase from Shewanella baltica (strain OS155 / ATCC BAA-1091).